Consider the following 265-residue polypeptide: UPF0354 protein GWCH70_2742 (265 aa).

It belongs to the UPF0354 family.

In Geobacillus sp. (strain WCH70), this protein is UPF0354 protein GWCH70_2742.